The sequence spans 284 residues: Bifunctional protein FolD (284 aa).

NADP(+) is bound by residues 166–168 (GAS) and I232.

It belongs to the tetrahydrofolate dehydrogenase/cyclohydrolase family. As to quaternary structure, homodimer.

The catalysed reaction is (6R)-5,10-methylene-5,6,7,8-tetrahydrofolate + NADP(+) = (6R)-5,10-methenyltetrahydrofolate + NADPH. It carries out the reaction (6R)-5,10-methenyltetrahydrofolate + H2O = (6R)-10-formyltetrahydrofolate + H(+). Its pathway is one-carbon metabolism; tetrahydrofolate interconversion. Functionally, catalyzes the oxidation of 5,10-methylenetetrahydrofolate to 5,10-methenyltetrahydrofolate and then the hydrolysis of 5,10-methenyltetrahydrofolate to 10-formyltetrahydrofolate. The protein is Bifunctional protein FolD of Pseudomonas aeruginosa (strain LESB58).